Consider the following 338-residue polypeptide: Putative peptide import ATP-binding protein BruAb2_0796 (338 aa).

The region spanning 7-263 is the ABC transporter domain; that stretch reads LDIEGLRTVF…PRHPYTMGLL (257 aa). An ATP-binding site is contributed by 43–50; the sequence is GESGSGKS.

The protein belongs to the ABC transporter superfamily. In terms of assembly, the complex is composed of two ATP-binding proteins (BruAb2_0796 and BruAb2_0797), two transmembrane proteins (BruAb2_0794) and a solute-binding protein (BruAb2_0792).

The protein resides in the cell inner membrane. Its function is as follows. Probably part of an ABC transporter complex that could be involved in peptide import. Probably responsible for energy coupling to the transport system. This is Putative peptide import ATP-binding protein BruAb2_0796 from Brucella abortus biovar 1 (strain 9-941).